Reading from the N-terminus, the 513-residue chain is Calcium-dependent protein kinase 2 (513 aa).

Residues 65-323 form the Protein kinase domain; the sequence is YSFGKELGRG…SAQVLQHQWL (259 aa). Residues 71-79 and lysine 94 contribute to the ATP site; that span reads LGRGQFGVT. The Proton acceptor role is filled by aspartate 189. Positions 329–359 are autoinhibitory domain; it reads ASDKPIDSAVLSRMKQFRAMNKLKKMALKVI. 4 consecutive EF-hand domains span residues 366-401, 402-437, 438-473, and 478-508; these read EEIK…LGSK, LSEA…RHKL, ERDE…HEMG, and IREI…GMQQ. 19 residues coordinate Ca(2+): aspartate 379, aspartate 381, serine 383, threonine 385, glutamate 390, aspartate 415, aspartate 417, asparagine 419, serine 421, glutamate 426, aspartate 451, aspartate 453, serine 455, glutamate 462, aspartate 486, aspartate 488, aspartate 490, arginine 492, and glutamate 497.

It belongs to the protein kinase superfamily. Ser/Thr protein kinase family. CDPK subfamily.

It catalyses the reaction L-seryl-[protein] + ATP = O-phospho-L-seryl-[protein] + ADP + H(+). The enzyme catalyses L-threonyl-[protein] + ATP = O-phospho-L-threonyl-[protein] + ADP + H(+). Its activity is regulated as follows. Activated by calcium. Autophosphorylation may play an important role in the regulation of the kinase activity. Functionally, may play a role in signal transduction pathways that involve calcium as a second messenger. This Zea mays (Maize) protein is Calcium-dependent protein kinase 2 (CPK2).